The sequence spans 154 residues: Transcriptional repressor NrdR (154 aa).

A zinc finger lies at 3–34; sequence CPFCGANDTKVIDSRLVAEGEQVRRRRECLAC. The ATP-cone domain occupies 49–139; it reads PRLIKQDGSR…VYRRFQDLNE (91 aa).

The protein belongs to the NrdR family. Zn(2+) serves as cofactor.

Functionally, negatively regulates transcription of bacterial ribonucleotide reductase nrd genes and operons by binding to NrdR-boxes. The sequence is that of Transcriptional repressor NrdR from Pseudomonas syringae pv. tomato (strain ATCC BAA-871 / DC3000).